We begin with the raw amino-acid sequence, 452 residues long: F-box only protein 47 (452 aa).

In terms of domain architecture, F-box spans 41–91 (FGNFKALPLEIFQIILKYLSVKDISMLSMVSKTVSQHIINYISTSSGSKRL).

In terms of assembly, part of a SCF (SKP1-cullin-F-box) protein ligase complex. As to expression, widely expressed, with highest levels in kidney, liver and pancreas. Down-regulated in tumors.

Functionally, probably recognizes and binds to some phosphorylated proteins and promotes their ubiquitination and degradation. The polypeptide is F-box only protein 47 (Homo sapiens (Human)).